A 77-amino-acid chain; its full sequence is Translational regulator CsrA (77 aa).

This sequence belongs to the CsrA/RsmA family. As to quaternary structure, homodimer; the beta-strands of each monomer intercalate to form a hydrophobic core, while the alpha-helices form wings that extend away from the core.

Its subcellular location is the cytoplasm. Functionally, a translational regulator that binds mRNA to regulate translation initiation and/or mRNA stability. Usually binds in the 5'-UTR at or near the Shine-Dalgarno sequence preventing ribosome-binding, thus repressing translation. Its main target seems to be the major flagellin gene, while its function is anatagonized by FliW. The sequence is that of Translational regulator CsrA from Desulfitobacterium hafniense (strain DSM 10664 / DCB-2).